Reading from the N-terminus, the 258-residue chain is Regulatory protein RecX (258 aa).

The protein belongs to the RecX family.

The protein resides in the cytoplasm. Functionally, modulates RecA activity. This chain is Regulatory protein RecX, found in Streptococcus pyogenes serotype M3 (strain ATCC BAA-595 / MGAS315).